The sequence spans 132 residues: Small ribosomal subunit protein uS8 (132 aa).

The protein belongs to the universal ribosomal protein uS8 family. As to quaternary structure, part of the 30S ribosomal subunit. Contacts proteins S5 and S12.

Functionally, one of the primary rRNA binding proteins, it binds directly to 16S rRNA central domain where it helps coordinate assembly of the platform of the 30S subunit. The chain is Small ribosomal subunit protein uS8 from Mycoplasmopsis synoviae (strain 53) (Mycoplasma synoviae).